A 404-amino-acid polypeptide reads, in one-letter code: Argininosuccinate synthase (404 aa).

Residues 12–20 (AYSGGLDTS) and Ala39 each bind ATP. The L-citrulline site is built by Tyr91 and Ser96. Position 121 (Gly121) interacts with ATP. 3 residues coordinate L-aspartate: Thr123, Asn127, and Asp128. Asn127 provides a ligand contact to L-citrulline. The L-citrulline site is built by Arg131, Ser180, Ser189, Glu265, and Tyr277.

This sequence belongs to the argininosuccinate synthase family. Type 1 subfamily. As to quaternary structure, homotetramer.

The protein localises to the cytoplasm. It catalyses the reaction L-citrulline + L-aspartate + ATP = 2-(N(omega)-L-arginino)succinate + AMP + diphosphate + H(+). Its pathway is amino-acid biosynthesis; L-arginine biosynthesis; L-arginine from L-ornithine and carbamoyl phosphate: step 2/3. The polypeptide is Argininosuccinate synthase (Vibrio parahaemolyticus serotype O3:K6 (strain RIMD 2210633)).